The sequence spans 96 residues: UPF0251 protein Ssed_3913 (96 aa).

Belongs to the UPF0251 family.

The sequence is that of UPF0251 protein Ssed_3913 from Shewanella sediminis (strain HAW-EB3).